A 757-amino-acid chain; its full sequence is RNA-directed RNA polymerase catalytic subunit (757 aa).

Positions 50-82 (SEKGKWTTNTETGAPQLNPIDGPLPEDNEPSGY) are disordered. Polar residues predominate over residues 55 to 64 (WTTNTETGAP). Short sequence motifs (nuclear localization signal) lie at residues 187 to 195 (RKRRVRDNM) and 203 to 216 (RTIGKKKQRVNKRS). The segment at 249-256 (RGFVYFVE) is promoter-binding site. The RdRp catalytic domain maps to 286–483 (VRKMMTNSQD…GINMSKKKSY (198 aa)).

Belongs to the influenza viruses polymerase PB1 family. In terms of assembly, influenza RNA polymerase is composed of three subunits: PB1, PB2 and PA. Interacts (via N-terminus) with PA (via C-terminus). Interacts (via C-terminus) with PB2 (via N-terminus); this interaction is essential for transcription initiation. Post-translationally, phosphorylated by host PRKCA.

It localises to the host nucleus. The protein resides in the host cytoplasm. It carries out the reaction RNA(n) + a ribonucleoside 5'-triphosphate = RNA(n+1) + diphosphate. RNA-dependent RNA polymerase which is responsible for replication and transcription of virus RNA segments. The transcription of viral mRNAs occurs by a unique mechanism called cap-snatching. 5' methylated caps of cellular mRNAs are cleaved after 10-13 nucleotides by PA. In turn, these short capped RNAs are used as primers by PB1 for transcription of viral mRNAs. During virus replication, PB1 initiates RNA synthesis and copy vRNA into complementary RNA (cRNA) which in turn serves as a template for the production of more vRNAs. The polypeptide is RNA-directed RNA polymerase catalytic subunit (Influenza A virus (strain A/Memphis/110/1976 H3N2)).